The following is a 231-amino-acid chain: LexA repressor (231 aa).

The segment at residues 26–46 (FDEMKDALDLRSKSGIHRLIT) is a DNA-binding region (H-T-H motif). Residues serine 152 and lysine 190 each act as for autocatalytic cleavage activity in the active site.

It belongs to the peptidase S24 family. Homodimer.

The enzyme catalyses Hydrolysis of Ala-|-Gly bond in repressor LexA.. Its function is as follows. Represses a number of genes involved in the response to DNA damage (SOS response), including recA and lexA. In the presence of single-stranded DNA, RecA interacts with LexA causing an autocatalytic cleavage which disrupts the DNA-binding part of LexA, leading to derepression of the SOS regulon and eventually DNA repair. In Bradyrhizobium diazoefficiens (strain JCM 10833 / BCRC 13528 / IAM 13628 / NBRC 14792 / USDA 110), this protein is LexA repressor.